We begin with the raw amino-acid sequence, 650 residues long: 1-deoxy-D-xylulose-5-phosphate synthase (650 aa).

Thiamine diphosphate-binding positions include histidine 73 and 113 to 115 (SHA). Aspartate 145 lines the Mg(2+) pocket. Thiamine diphosphate contacts are provided by residues 146–147 (GA), asparagine 175, tyrosine 287, and glutamate 369. Asparagine 175 is a Mg(2+) binding site. The tract at residues 629 to 650 (SARPLPEDAERVPMRAEDDEQA) is disordered. The segment covering 633 to 644 (LPEDAERVPMRA) has biased composition (basic and acidic residues).

Belongs to the transketolase family. DXPS subfamily. As to quaternary structure, homodimer. Mg(2+) is required as a cofactor. Thiamine diphosphate serves as cofactor.

It catalyses the reaction D-glyceraldehyde 3-phosphate + pyruvate + H(+) = 1-deoxy-D-xylulose 5-phosphate + CO2. It functions in the pathway metabolic intermediate biosynthesis; 1-deoxy-D-xylulose 5-phosphate biosynthesis; 1-deoxy-D-xylulose 5-phosphate from D-glyceraldehyde 3-phosphate and pyruvate: step 1/1. Catalyzes the acyloin condensation reaction between C atoms 2 and 3 of pyruvate and glyceraldehyde 3-phosphate to yield 1-deoxy-D-xylulose-5-phosphate (DXP). This Clavibacter sepedonicus (Clavibacter michiganensis subsp. sepedonicus) protein is 1-deoxy-D-xylulose-5-phosphate synthase.